A 265-amino-acid polypeptide reads, in one-letter code: NAD kinase 1 (265 aa).

D45 serves as the catalytic Proton acceptor. NAD(+) is bound by residues 45–46 (DG), 122–123 (NE), R148, D150, and A185.

Belongs to the NAD kinase family. Requires a divalent metal cation as cofactor.

It is found in the cytoplasm. The enzyme catalyses NAD(+) + ATP = ADP + NADP(+) + H(+). Functionally, involved in the regulation of the intracellular balance of NAD and NADP, and is a key enzyme in the biosynthesis of NADP. Catalyzes specifically the phosphorylation on 2'-hydroxyl of the adenosine moiety of NAD to yield NADP. The polypeptide is NAD kinase 1 (Bacillus anthracis).